The chain runs to 1247 residues: ABC transporter B family member 14 (1247 aa).

An ABC transmembrane type-1 1 domain is found at Met48–Lys337. The next 6 membrane-spanning stretches (helical) occupy residues Phe49 to Phe69, Leu95 to Trp115, His172 to Trp192, Leu196 to Met216, Leu277 to Ala297, and Ile315 to Ile335. N-linked (GlcNAc...) asparagine glycosylation is found at Asn362 and Asn392. Residues Ile373–Cys608 form the ABC transporter 1 domain. Residue Gly407–Ser414 coordinates ATP. In terms of domain architecture, ABC transmembrane type-1 2 spans Glu679 to Lys971. The next 2 membrane-spanning stretches (helical) occupy residues Trp680 to Phe700 and Ala727 to Phe747. A glycan (N-linked (GlcNAc...) asparagine) is linked at Asn780. 3 consecutive transmembrane segments (helical) span residues Ile807–Tyr824, Ala830–Leu850, and Leu915–Ile935. N-linked (GlcNAc...) asparagine glycosylation occurs at Asn938. Residues Phe949–Ile969 traverse the membrane as a helical segment. Positions Ile1006–Ser1242 constitute an ABC transporter 2 domain. N-linked (GlcNAc...) asparagine glycosylation is present at Asn1010. Gly1041–Ser1048 is an ATP binding site. N-linked (GlcNAc...) asparagine glycosylation occurs at Asn1108.

The protein belongs to the ABC transporter superfamily. ABCB family. Multidrug resistance exporter (TC 3.A.1.201) subfamily.

Its subcellular location is the membrane. The chain is ABC transporter B family member 14 (ABCB14) from Arabidopsis thaliana (Mouse-ear cress).